Here is a 469-residue protein sequence, read N- to C-terminus: Lipase A (469 aa).

The N-terminal stretch at 1–22 is a signal peptide; sequence MMFLTQLVSALFLFFLGPISYG. The segment covering 40–51 has biased composition (pro residues); sequence PSEDPFYQPPPG. The disordered stretch occupies residues 40-59; it reads PSEDPFYQPPPGYEETEPGT. The N-linked (GlcNAc...) asparagine glycan is linked to asparagine 111. Cysteine 129 and cysteine 304 are disulfide-bonded. Catalysis depends on charge relay system residues serine 217, aspartate 361, and histidine 393. A disulfide bond links cysteine 377 and cysteine 421.

The protein belongs to the AB hydrolase superfamily. Lipase family. Class Lip subfamily. In terms of assembly, monomer.

It is found in the secreted. The catalysed reaction is a triacylglycerol + H2O = a diacylglycerol + a fatty acid + H(+). Its function is as follows. Hydrolyzes triglycerides, with a preference for substrates with short-chain lengths (C4 to C8). This is Lipase A from Arthroderma benhamiae (strain ATCC MYA-4681 / CBS 112371) (Trichophyton mentagrophytes).